The following is a 954-amino-acid chain: Valine--tRNA ligase (954 aa).

The short motif at 48–58 is the 'HIGH' region element; it reads PNVTGSLHMGH. A 'KMSKS' region motif is present at residues 560-564; the sequence is KMSKS. Lys563 provides a ligand contact to ATP. The stretch at 883–954 forms a coiled coil; the sequence is AGFINKEAEL…QTQYQAIENL (72 aa).

This sequence belongs to the class-I aminoacyl-tRNA synthetase family. ValS type 1 subfamily. Monomer.

Its subcellular location is the cytoplasm. It carries out the reaction tRNA(Val) + L-valine + ATP = L-valyl-tRNA(Val) + AMP + diphosphate. Catalyzes the attachment of valine to tRNA(Val). As ValRS can inadvertently accommodate and process structurally similar amino acids such as threonine, to avoid such errors, it has a 'posttransfer' editing activity that hydrolyzes mischarged Thr-tRNA(Val) in a tRNA-dependent manner. The polypeptide is Valine--tRNA ligase (Actinobacillus pleuropneumoniae serotype 3 (strain JL03)).